The primary structure comprises 285 residues: Putative cytochrome c peroxidase, mitochondrial (285 aa).

His37 serves as the catalytic Proton acceptor. His161 contributes to the heme b binding site. Trp177 serves as the catalytic Tryptophan radical intermediate.

It belongs to the peroxidase family. Cytochrome c peroxidase subfamily. In terms of assembly, forms a one-to-one complex with cytochrome c. Heme b serves as cofactor.

Its subcellular location is the mitochondrion matrix. It is found in the mitochondrion intermembrane space. It carries out the reaction 2 Fe(II)-[cytochrome c] + H2O2 + 2 H(+) = 2 Fe(III)-[cytochrome c] + 2 H2O. Its function is as follows. Destroys radicals which are normally produced within the cells and which are toxic to biological systems. The polypeptide is Putative cytochrome c peroxidase, mitochondrial (Yarrowia lipolytica (strain CLIB 122 / E 150) (Yeast)).